The sequence spans 239 residues: Phosphoribosylaminoimidazole-succinocarboxamide synthase (239 aa).

The protein belongs to the SAICAR synthetase family.

It catalyses the reaction 5-amino-1-(5-phospho-D-ribosyl)imidazole-4-carboxylate + L-aspartate + ATP = (2S)-2-[5-amino-1-(5-phospho-beta-D-ribosyl)imidazole-4-carboxamido]succinate + ADP + phosphate + 2 H(+). The protein operates within purine metabolism; IMP biosynthesis via de novo pathway; 5-amino-1-(5-phospho-D-ribosyl)imidazole-4-carboxamide from 5-amino-1-(5-phospho-D-ribosyl)imidazole-4-carboxylate: step 1/2. This Bacillus cereus (strain G9842) protein is Phosphoribosylaminoimidazole-succinocarboxamide synthase.